The chain runs to 795 residues: Phenylalanine--tRNA ligase beta subunit (795 aa).

Residues 39–148 (AGSFHGVVVG…ADAPIGTDIR (110 aa)) form the tRNA-binding domain. The B5 domain maps to 401–476 (PKRATITLRR…RVYGYNNIPD (76 aa)). Mg(2+) is bound by residues D454, D460, E463, and E464. Positions 701 to 794 (SRFPANRRDI…LKERFQASLR (94 aa)) constitute an FDX-ACB domain.

This sequence belongs to the phenylalanyl-tRNA synthetase beta subunit family. Type 1 subfamily. Tetramer of two alpha and two beta subunits. Mg(2+) serves as cofactor.

The protein localises to the cytoplasm. It carries out the reaction tRNA(Phe) + L-phenylalanine + ATP = L-phenylalanyl-tRNA(Phe) + AMP + diphosphate + H(+). The sequence is that of Phenylalanine--tRNA ligase beta subunit from Shigella flexneri.